The primary structure comprises 154 residues: Endoribonuclease YbeY (154 aa).

Residues H114, H118, and H124 each coordinate Zn(2+).

Belongs to the endoribonuclease YbeY family. The cofactor is Zn(2+).

It localises to the cytoplasm. In terms of biological role, single strand-specific metallo-endoribonuclease involved in late-stage 70S ribosome quality control and in maturation of the 3' terminus of the 16S rRNA. The chain is Endoribonuclease YbeY from Marinomonas sp. (strain MWYL1).